A 398-amino-acid polypeptide reads, in one-letter code: Serpin-ZX (398 aa).

Residues G342–D366 are RCL.

The protein belongs to the serpin family. As to expression, expressed in roots, coleoptiles, shoots, leaves, embryo and endosperm.

Inhibits chymotrypsin, cathepsin G and trypsin in vitro. In Hordeum vulgare (Barley), this protein is Serpin-ZX (PAZX).